The sequence spans 1097 residues: UPF0746 protein DDB_G0281095 (1097 aa).

Residues 1–11 are compositionally biased toward basic and acidic residues; it reads MVNNNKRKEIE. The segment at 1-24 is disordered; the sequence is MVNNNKRKEIENQENDNDDDNDGL. Over residues 12 to 22 the composition is skewed to acidic residues; sequence NQENDNDDDND. The 35-residue stretch at 35–69 folds into the SAP domain; the sequence is YDSIRSKELQTIAKSLGLPNNGKKQEVYKRIEGYF. Residues 329-521 are a coiled coil; sequence FKEIREIHQQ…QLILELNEIQ (193 aa).

This sequence belongs to the UPF0746 family.

The sequence is that of UPF0746 protein DDB_G0281095 from Dictyostelium discoideum (Social amoeba).